A 357-amino-acid chain; its full sequence is tRNA-specific 2-thiouridylase MnmA (357 aa).

ATP-binding positions include 7–14 (GMSGGVDS) and methionine 33. The active-site Nucleophile is the cysteine 103. Cysteine 103 and cysteine 200 form a disulfide bridge. Glycine 127 contacts ATP. The segment at 150–152 (KDQ) is interaction with tRNA. The active-site Cysteine persulfide intermediate is cysteine 200. Residues 306–307 (RY) form an interaction with tRNA region.

It belongs to the MnmA/TRMU family.

It localises to the cytoplasm. The catalysed reaction is S-sulfanyl-L-cysteinyl-[protein] + uridine(34) in tRNA + AH2 + ATP = 2-thiouridine(34) in tRNA + L-cysteinyl-[protein] + A + AMP + diphosphate + H(+). Its function is as follows. Catalyzes the 2-thiolation of uridine at the wobble position (U34) of tRNA, leading to the formation of s(2)U34. This Lachnoclostridium phytofermentans (strain ATCC 700394 / DSM 18823 / ISDg) (Clostridium phytofermentans) protein is tRNA-specific 2-thiouridylase MnmA.